A 256-amino-acid polypeptide reads, in one-letter code: Leucine-rich repeat-containing protein 18 (256 aa).

8 LRR repeats span residues 28 to 49 (GRKR…ILRL), 51 to 72 (EIDE…ISKF), 74 to 95 (NLRW…IGQM), 97 to 118 (SLLF…VELN), 122 to 144 (NIRT…GALK), 145 to 167 (ELHE…SKLP), 168 to 189 (KLKK…DMFV), and 194 to 215 (RLEN…QKCQ).

The protein localises to the cytoplasm. In terms of biological role, may be involved in the regulation of spermatogenesis and sperm maturation. The protein is Leucine-rich repeat-containing protein 18 (Lrrc18) of Rattus norvegicus (Rat).